The primary structure comprises 422 residues: UDP-N-acetylglucosamine 1-carboxyvinyltransferase (422 aa).

22–23 (KN) is a binding site for phosphoenolpyruvate. Position 93 (Arg93) interacts with UDP-N-acetyl-alpha-D-glucosamine. Residue Cys117 is the Proton donor of the active site. Cys117 is subject to 2-(S-cysteinyl)pyruvic acid O-phosphothioketal. UDP-N-acetyl-alpha-D-glucosamine-binding positions include 122–126 (RPVDL), Asp308, and Leu330.

This sequence belongs to the EPSP synthase family. MurA subfamily.

Its subcellular location is the cytoplasm. It catalyses the reaction phosphoenolpyruvate + UDP-N-acetyl-alpha-D-glucosamine = UDP-N-acetyl-3-O-(1-carboxyvinyl)-alpha-D-glucosamine + phosphate. It functions in the pathway cell wall biogenesis; peptidoglycan biosynthesis. Functionally, cell wall formation. Adds enolpyruvyl to UDP-N-acetylglucosamine. This is UDP-N-acetylglucosamine 1-carboxyvinyltransferase from Helicobacter pylori (strain HPAG1).